The following is a 119-amino-acid chain: Large ribosomal subunit protein bL20 (119 aa).

It belongs to the bacterial ribosomal protein bL20 family.

Its function is as follows. Binds directly to 23S ribosomal RNA and is necessary for the in vitro assembly process of the 50S ribosomal subunit. It is not involved in the protein synthesizing functions of that subunit. In Methylocella silvestris (strain DSM 15510 / CIP 108128 / LMG 27833 / NCIMB 13906 / BL2), this protein is Large ribosomal subunit protein bL20.